Consider the following 212-residue polypeptide: HTH-type transcriptional repressor NicS (212 aa).

The HTH tetR-type domain maps to 14–74 (DRTRDNILKA…SVLEHIYASF (61 aa)). Positions 37-56 (RIEQISTLAKSNDRMIYYYF) form a DNA-binding region, H-T-H motif.

It participates in cofactor degradation; nicotinate degradation [regulation]. In terms of biological role, transcriptional repressor for the nicAB operon, encoding the upper aerobic nicotinate degradation pathway. Acts under non-induced conditions: repression of the nicAB operon becomes alleviated in presence of either nicotinate or 6-hydroxynicotinate (6HNA). In Pseudomonas putida (strain ATCC 47054 / DSM 6125 / CFBP 8728 / NCIMB 11950 / KT2440), this protein is HTH-type transcriptional repressor NicS (nicS).